Reading from the N-terminus, the 156-residue chain is Ribonuclease H (156 aa).

Residues M1–E142 enclose the RNase H type-1 domain. Mg(2+)-binding residues include D10, E48, D70, and D134. A disordered region spans residues E135–Q156.

It belongs to the RNase H family. In terms of assembly, monomer. Mg(2+) serves as cofactor.

The protein localises to the cytoplasm. The enzyme catalyses Endonucleolytic cleavage to 5'-phosphomonoester.. Its function is as follows. Endonuclease that specifically degrades the RNA of RNA-DNA hybrids. The sequence is that of Ribonuclease H from Vibrio cholerae serotype O1 (strain M66-2).